The primary structure comprises 348 residues: Histidinol-phosphate aminotransferase (348 aa).

At K210 the chain carries N6-(pyridoxal phosphate)lysine.

It belongs to the class-II pyridoxal-phosphate-dependent aminotransferase family. Histidinol-phosphate aminotransferase subfamily. As to quaternary structure, homodimer. The cofactor is pyridoxal 5'-phosphate.

The catalysed reaction is L-histidinol phosphate + 2-oxoglutarate = 3-(imidazol-4-yl)-2-oxopropyl phosphate + L-glutamate. It participates in amino-acid biosynthesis; L-histidine biosynthesis; L-histidine from 5-phospho-alpha-D-ribose 1-diphosphate: step 7/9. This Pseudomonas putida (strain ATCC 47054 / DSM 6125 / CFBP 8728 / NCIMB 11950 / KT2440) protein is Histidinol-phosphate aminotransferase.